We begin with the raw amino-acid sequence, 360 residues long: MKASMLAKLDQLAERLDEVNALLAREDATANIDQYRKLSREHAELSPVAEQYSQYRQAQDDLATAQALLDDPEMKDFAADEIAAARDRLEALQASLQRLLLPKDPNDDRNLLLEIRAGTGGEESALFAADLLRMYTRYAERQRWQVEVMSESESDLGGYKEVIIRIAGDAAFSRLKFESGGHRVQRVPATEAQGRIHTSACTVAVMPEADEVGEVEINPADLRIDTFRASGAGGQHVNKTDSAVRLTHLPTGIVVECQDDRSQHRNKDKAMKVLAARIKDMQTRAAQAREASTRRNLIGSGDRSDRIRTYNFPQGRVTDHRINLTLYKIDMIMDGDMDELLSALSAEHQADQLAALGEDA.

Gln-235 is modified (N5-methylglutamine).

It belongs to the prokaryotic/mitochondrial release factor family. Post-translationally, methylated by PrmC. Methylation increases the termination efficiency of RF1.

It is found in the cytoplasm. Its function is as follows. Peptide chain release factor 1 directs the termination of translation in response to the peptide chain termination codons UAG and UAA. This is Peptide chain release factor 1 from Cupriavidus taiwanensis (strain DSM 17343 / BCRC 17206 / CCUG 44338 / CIP 107171 / LMG 19424 / R1) (Ralstonia taiwanensis (strain LMG 19424)).